Consider the following 86-residue polypeptide: Apolipoprotein C-I (86 aa).

The signal sequence occupies residues 1-26; it reads MRLFLSLPVLVVALLTILEGPGPAQG.

Belongs to the apolipoprotein C1 family.

The protein localises to the secreted. Inhibitor of lipoprotein binding to the low density lipoprotein (LDL) receptor, LDL receptor-related protein, and very low density lipoprotein (VLDL) receptor. Associates with high density lipoproteins (HDL) and the triacylglycerol-rich lipoproteins in the plasma and makes up about 10% of the protein of the VLDL and 2% of that of HDL. Appears to interfere directly with fatty acid uptake and is also the major plasma inhibitor of cholesteryl ester transfer protein (CETP). Binds free fatty acids and reduces their intracellular esterification. Modulates the interaction of APOE with beta-migrating VLDL and inhibits binding of beta-VLDL to the LDL receptor-related protein. The polypeptide is Apolipoprotein C-I (APOC1) (Plecturocebus moloch (Dusky titi monkey)).